Here is a 213-residue protein sequence, read N- to C-terminus: Large ribosomal subunit protein uL1 (213 aa).

The protein belongs to the universal ribosomal protein uL1 family. Part of the 50S ribosomal subunit.

In terms of biological role, binds directly to 23S rRNA. Probably involved in E site tRNA release. Its function is as follows. Protein L1 is also a translational repressor protein, it controls the translation of its operon by binding to its mRNA. This chain is Large ribosomal subunit protein uL1, found in Nanoarchaeum equitans (strain Kin4-M).